Here is a 454-residue protein sequence, read N- to C-terminus: UDP-N-acetylmuramate--L-alanine ligase (454 aa).

113–119 (GSHGKTT) provides a ligand contact to ATP.

This sequence belongs to the MurCDEF family.

The protein resides in the cytoplasm. The enzyme catalyses UDP-N-acetyl-alpha-D-muramate + L-alanine + ATP = UDP-N-acetyl-alpha-D-muramoyl-L-alanine + ADP + phosphate + H(+). It functions in the pathway cell wall biogenesis; peptidoglycan biosynthesis. Functionally, cell wall formation. This is UDP-N-acetylmuramate--L-alanine ligase from Sulfurihydrogenibium sp. (strain YO3AOP1).